A 552-amino-acid chain; its full sequence is DnaJ homolog subfamily C member 1 (552 aa).

Residues M1–A43 form the signal peptide. The Lumenal segment spans residues W44–E149. A J domain is found at E56–L129. A helical membrane pass occupies residues L150–Y170. At L171 to S552 the chain is on the cytoplasmic side. Residues R323–T377 form the SANT 1 domain. A disordered region spans residues K370–W495. S379 carries the post-translational modification Phosphoserine. Acidic residues predominate over residues M419–Q431. Positions T453–D470 are enriched in basic and acidic residues. S477 and S478 each carry phosphoserine. Basic and acidic residues predominate over residues E480 to E492. Residues A490–Q545 form the SANT 2 domain.

As to quaternary structure, interacts (via J domain) with HSPA5. Interacts (via cytosolic domain) with ribosomes. Interacts (via SANT 2 domain) with SERPINA3; the interaction delays the formation of the covalent inhibitory complex SERPINA3-chymotrypsin, but does not alter the catalytic activity of SERPINA3. Interacts (via SANT 2 domain) with ITIH4 (via C-terminus); the interaction protects ITIH4 against in vitro cleavage by kallikrein. In terms of tissue distribution, widely expressed.

The protein resides in the endoplasmic reticulum membrane. The protein localises to the nucleus membrane. It localises to the microsome membrane. Functionally, may modulate protein synthesis. The protein is DnaJ homolog subfamily C member 1 (Dnajc1) of Mus musculus (Mouse).